A 75-amino-acid chain; its full sequence is Large ribosomal subunit protein eL14 (75 aa).

The protein belongs to the eukaryotic ribosomal protein eL14 family.

The protein is Large ribosomal subunit protein eL14 of Methanothermobacter thermautotrophicus (strain ATCC 29096 / DSM 1053 / JCM 10044 / NBRC 100330 / Delta H) (Methanobacterium thermoautotrophicum).